The following is a 387-amino-acid chain: 3-ketoacyl-CoA thiolase (387 aa).

Catalysis depends on Cys-91, which acts as the Acyl-thioester intermediate. Catalysis depends on proton acceptor residues His-343 and Cys-373.

It belongs to the thiolase-like superfamily. Thiolase family. In terms of assembly, heterotetramer of two alpha chains (FadB) and two beta chains (FadA).

It is found in the cytoplasm. It catalyses the reaction an acyl-CoA + acetyl-CoA = a 3-oxoacyl-CoA + CoA. It participates in lipid metabolism; fatty acid beta-oxidation. Functionally, catalyzes the final step of fatty acid oxidation in which acetyl-CoA is released and the CoA ester of a fatty acid two carbons shorter is formed. The chain is 3-ketoacyl-CoA thiolase from Yersinia pseudotuberculosis serotype O:1b (strain IP 31758).